The primary structure comprises 423 residues: UBX domain-containing protein 1 (423 aa).

A disordered region spans residues 44 to 167 (QTDDQKDRRE…EVTDPSDPNS (124 aa)). A compositionally biased stretch (basic and acidic residues) spans 46-66 (DDQKDRREEAHWNRQQEKALK). The span at 69 to 79 (AFSTNSSNKAI) shows a compositional bias: polar residues. The span at 115–130 (SSRSGSGNNSRFMSFS) shows a compositional bias: low complexity. Residues Ser128, Ser210, and Ser224 each carry the phosphoserine modification. The SEP domain occupies 232-297 (KVTREITFWK…VYKKLDESYK (66 aa)). Residue Lys241 forms a Glycyl lysine isopeptide (Lys-Gly) (interchain with G-Cter in ubiquitin) linkage. Residues 299 to 348 (PTRKLGGFSGQGQRLGSPIPGESSPAEVPKNETPAAQEQPMPDNEPKQGD) form a disordered region. Phosphoserine occurs at positions 315, 321, and 322. A Phosphothreonine modification is found at Thr331. One can recognise a UBX domain in the interval 344–421 (PKQGDTSIQI…DLLNSVVVQR (78 aa)).

As to quaternary structure, forms a complex composed of CDC48, NPL4, UFD1, DOA1, SHP1 and deubiquitinase OTU1. Interacts with CDC48.

The protein resides in the nucleus. Its subcellular location is the cytoplasm. Its function is as follows. Involved in CDC48-dependent protein degradation through the ubiquitin/proteasome pathway. Direct or indirect positive regulator of GLC7 activity. In Saccharomyces cerevisiae (strain ATCC 204508 / S288c) (Baker's yeast), this protein is UBX domain-containing protein 1 (SHP1).